The sequence spans 427 residues: MRKEKSLGLAAEMRTLAEASREAARALSHADPRRKDAALRAAAEAIGRREKRILSENARDVAAARAAGQNAAYLDRLKLDPKRLAGIAAALHEIAGLRDPVGEVTASWRRPNGLEIRKVRIPLGVVLMVYEARPNVTVDAAALCLKSGNAAILRPGSDALRSSLALAAAFAEGLEKAGLPAASAQVVPTPDREATYELLALDDLIDLAIPRGGPSLIRAVAERSRVPVLKHYQGVCHLYLDASAPPQQAVDLALNGKVQRPGVCNATECLLVHRGAAGKLLPPVGRALADAGVELRCDPTALTILKRAGVAAVPARPDDFGKEFLDRILAVRVVADLDGALDHIARYGSLHTEAIVTRDLASARRFQREVDASAVMVNASTRFNDGGELGLGAEIGISTTKLHAFGPMGLAELTTQKFLVEGEGHVR.

Belongs to the gamma-glutamyl phosphate reductase family.

The protein localises to the cytoplasm. The catalysed reaction is L-glutamate 5-semialdehyde + phosphate + NADP(+) = L-glutamyl 5-phosphate + NADPH + H(+). It functions in the pathway amino-acid biosynthesis; L-proline biosynthesis; L-glutamate 5-semialdehyde from L-glutamate: step 2/2. Catalyzes the NADPH-dependent reduction of L-glutamate 5-phosphate into L-glutamate 5-semialdehyde and phosphate. The product spontaneously undergoes cyclization to form 1-pyrroline-5-carboxylate. This Anaeromyxobacter sp. (strain K) protein is Gamma-glutamyl phosphate reductase.